The primary structure comprises 231 residues: Eukaryotic translation initiation factor 4E-1 (231 aa).

EIF4G-binding stretches follow at residues 56–59 and 66–102; these read HPLE and FDNP…NNIH. MRNA contacts are provided by residues 74-79, K106, and 124-125; these read RQTAWG and WE. C129 and C167 are oxidised to a cystine. An EIF4G-binding region spans residues 150–159; the sequence is YTLLAMIGHQ. MRNA is bound by residues 174–179 and 219–223; these read RAKGEK and KRLDR.

This sequence belongs to the eukaryotic initiation factor 4E family. In terms of assembly, EIF4F is a multi-subunit complex, the composition of which varies with external and internal environmental conditions. It is composed of at least EIF4A, EIF4E and EIF4G. EIF4E is also known to interact with other partners. In higher plants two isoforms of EIF4F have been identified, named isoform EIF4F and isoform EIF(iso)4F. Isoform EIF4F has subunits p220 and p26, whereas isoform EIF(iso)4F has subunits p82 and p28. (Microbial infection) Interacts with potyvirus viral genome-linked protein (VPg); mostly with tobacco etch virus (TEV-HAT) VPg and, to a lower extent, with potato virus Y (PVY-LYE84 and PVY-LYE90) and pepper mottle virus (PepMoV) VPg. Post-translationally, according to the redox status, the Cys-129-Cys-167 disulfide bridge may have a role in regulating protein function by affecting its ability to bind capped mRNA.

It is found in the nucleus. The protein resides in the cytoplasm. In terms of biological role, component of the protein complex eIF4F, which is involved in the recognition of the mRNA cap, ATP-dependent unwinding of 5'-terminal secondary structure and recruitment of mRNA to the ribosome. Recognizes and binds the 7-methylguanosine-containing mRNA cap during an early step in the initiation of protein synthesis and facilitates ribosome binding by inducing the unwinding of the mRNAs secondary structures. Key component of recessive resistance to potyviruses. Its function is as follows. (Microbial infection) Susceptibility host factor required for viral infection (e.g. potato virus Y (PVY), pepper mottle virus (PepMoV) and tobacco etch virus (TEV)) by recruiting viral RNAs to the host ribosomal complex via an interaction with viral genome-linked protein (VPg). The sequence is that of Eukaryotic translation initiation factor 4E-1 from Solanum lycopersicum (Tomato).